The primary structure comprises 214 residues: NADH-ubiquinone oxidoreductase chain 5 (214 aa).

Helical transmembrane passes span 14–34 (LNTWALLLTLMATAFTATYSI), 58–78 (PLITAPLTRLALGSITAGMII), 92–112 (MPLITKTAAILMTILGIILAL), and 192–212 (TGLIKAYLGSFALSILVMILM).

Belongs to the complex I subunit 5 family.

Its subcellular location is the mitochondrion inner membrane. The enzyme catalyses a ubiquinone + NADH + 5 H(+)(in) = a ubiquinol + NAD(+) + 4 H(+)(out). Functionally, core subunit of the mitochondrial membrane respiratory chain NADH dehydrogenase (Complex I) that is believed to belong to the minimal assembly required for catalysis. Complex I functions in the transfer of electrons from NADH to the respiratory chain. The immediate electron acceptor for the enzyme is believed to be ubiquinone. In Anser caerulescens (Snow goose), this protein is NADH-ubiquinone oxidoreductase chain 5 (MT-ND5).